The primary structure comprises 109 residues: Nucleoid-associated protein LGAS_0369 (109 aa).

The protein belongs to the YbaB/EbfC family. Homodimer.

It localises to the cytoplasm. Its subcellular location is the nucleoid. Its function is as follows. Binds to DNA and alters its conformation. May be involved in regulation of gene expression, nucleoid organization and DNA protection. The sequence is that of Nucleoid-associated protein LGAS_0369 from Lactobacillus gasseri (strain ATCC 33323 / DSM 20243 / BCRC 14619 / CIP 102991 / JCM 1131 / KCTC 3163 / NCIMB 11718 / NCTC 13722 / AM63).